The following is a 299-amino-acid chain: Non-structural protein V (299 aa).

The disordered stretch occupies residues Ser-40 to Glu-91. The tract at residues His-110–Val-120 is interaction with host STAT1. The interval Ser-133–Tyr-163 is disordered. Residues Gly-144–Thr-160 are compositionally biased toward acidic residues. Positions 232, 251, 255, 267, 269, 272, 276, and 279 each coordinate Zn(2+).

This sequence belongs to the paramyxoviruses V protein family. As to quaternary structure, interacts with host IFIH1/MDA5 and DHX58/LGP2; these interactions are involved in the inhibition of the host type I interferon signaling pathway. Interacts with host TYK2; this interaction inhibits the type I interferon signaling pathway without affecting the type II pathway. Interacts with host IRF7; this interaction inhibits IRF7 translocation to the nucleus. Interacts with host CHUK. Interacts with host RELA/p65; this interaction inhibits the nuclear translocation of NF-KappaB. Interacts (via N-terminus) with host STAT1 and JAK1; these interactions inhibit STAT1 phosphorylation by Jak1 and thereby the type I interferon signaling pathway. Interacts (via C-terminus) with host STAT2; this interaction is involved in the inhibition of the host type I interferon signaling pathway. Forms a complex with host PPP1CA and PPP1CC; this interaction prevents dephosphorylation of host IFIH1/MDA5 and leads to the inhibition of the host type I interferon signaling pathway. Interacts with host IRF9; this interaction prevents the binding of IRF9 to STAT2 and thereby the type I interferon signaling pathway. Interacts with host RIGI regulatory protein (via CARDs domain) and host TRIM25 (via SPRY domain); these interactions prevent TRIM25-mediated ubiquitination of RIG-I and disrupts downstream RIG-I signaling.

It is found in the host cytoplasm. Plays an essential role in the inhibition of host immune response. Prevents the establishment of cellular antiviral state by blocking interferon-alpha/beta (IFN-alpha/beta) production and signaling pathway. Interacts with host IFIH1/MDA5 and DHX58/LGP2 to inhibit the transduction pathway involved in the activation of IFN-beta promoter, thus protecting the virus against cell antiviral state. Blocks the type I interferon signaling pathway by interacting with host TYK2 and thereby inhibiting downstream STAT1 and STAT2 phosphorylation. Blocks the type I interferon signaling pathway by disrupting the RIG-I signaling pathway. Moderately affects the type II interferon signaling. Prevents PP1alpha/gamma-mediated dephosphorylation of host IFIH1/MDA5 and thus blocks its activation. In Homo sapiens (Human), this protein is Non-structural protein V (P/V).